The chain runs to 266 residues: DNA repair protein RecO (266 aa).

Belongs to the RecO family.

Its function is as follows. Involved in DNA repair and RecF pathway recombination. In Synechococcus elongatus (strain ATCC 33912 / PCC 7942 / FACHB-805) (Anacystis nidulans R2), this protein is DNA repair protein RecO.